Reading from the N-terminus, the 305-residue chain is N-acyl-aromatic-L-amino acid amidohydrolase (carboxylate-forming) (305 aa).

2 residues coordinate Zn(2+): histidine 15 and glutamate 18. Residues arginine 57 and 64–65 (NR) contribute to the substrate site. Position 108 (histidine 108) interacts with Zn(2+). Positions 171 and 281 each coordinate substrate.

The protein belongs to the AspA/AstE family. Aspartoacylase subfamily. Homotetramer. The cofactor is Zn(2+).

It is found in the apical cell membrane. The protein resides in the cytoplasm. The catalysed reaction is an N-acyl-aromatic L-alpha-amino acid + H2O = an aromatic L-alpha-amino acid + a carboxylate. It catalyses the reaction an N-acetyl-L-cysteine-S-conjugate + H2O = an S-substituted L-cysteine + acetate. Plays an important role in deacetylating mercapturic acids in kidney proximal tubules. This Xenopus laevis (African clawed frog) protein is N-acyl-aromatic-L-amino acid amidohydrolase (carboxylate-forming) (acy3).